Reading from the N-terminus, the 86-residue chain is uncharacterized protein (86 aa).

A helical transmembrane segment spans residues 4 to 24 (LFFTLIAFVAIILLMSIGFII).

The protein resides in the membrane. This is an uncharacterized protein from Haemophilus influenzae (strain ATCC 51907 / DSM 11121 / KW20 / Rd).